Consider the following 211-residue polypeptide: Thiamine-phosphate synthase (211 aa).

4-amino-2-methyl-5-(diphosphooxymethyl)pyrimidine-binding positions include Gln-37–Lys-41 and Asn-69. Residues Asp-70 and Asp-89 each coordinate Mg(2+). Ser-108 contacts 4-amino-2-methyl-5-(diphosphooxymethyl)pyrimidine. A 2-[(2R,5Z)-2-carboxy-4-methylthiazol-5(2H)-ylidene]ethyl phosphate-binding site is contributed by Thr-134 to Thr-136. Lys-137 provides a ligand contact to 4-amino-2-methyl-5-(diphosphooxymethyl)pyrimidine. Residues Gly-166 and Val-186–Ser-187 each bind 2-[(2R,5Z)-2-carboxy-4-methylthiazol-5(2H)-ylidene]ethyl phosphate.

Belongs to the thiamine-phosphate synthase family. Mg(2+) serves as cofactor.

The catalysed reaction is 2-[(2R,5Z)-2-carboxy-4-methylthiazol-5(2H)-ylidene]ethyl phosphate + 4-amino-2-methyl-5-(diphosphooxymethyl)pyrimidine + 2 H(+) = thiamine phosphate + CO2 + diphosphate. It carries out the reaction 2-(2-carboxy-4-methylthiazol-5-yl)ethyl phosphate + 4-amino-2-methyl-5-(diphosphooxymethyl)pyrimidine + 2 H(+) = thiamine phosphate + CO2 + diphosphate. The enzyme catalyses 4-methyl-5-(2-phosphooxyethyl)-thiazole + 4-amino-2-methyl-5-(diphosphooxymethyl)pyrimidine + H(+) = thiamine phosphate + diphosphate. It functions in the pathway cofactor biosynthesis; thiamine diphosphate biosynthesis; thiamine phosphate from 4-amino-2-methyl-5-diphosphomethylpyrimidine and 4-methyl-5-(2-phosphoethyl)-thiazole: step 1/1. Its function is as follows. Condenses 4-methyl-5-(beta-hydroxyethyl)thiazole monophosphate (THZ-P) and 2-methyl-4-amino-5-hydroxymethyl pyrimidine pyrophosphate (HMP-PP) to form thiamine monophosphate (TMP). The sequence is that of Thiamine-phosphate synthase from Escherichia coli O9:H4 (strain HS).